The primary structure comprises 225 residues: Lipid A 4'-phosphatase (225 aa).

6 helical membrane passes run 29–49 (SAFTGKVIWVPMYASILYILL), 51–71 (NFHWKVALCYVVAIALTITFA), 110–130 (FGFPSCHAANSFGLAIFLICL), 136–156 (LSIFIVLWAFTNSYTRLYLGL), 160–180 (GDLVAGAIIGGFGGWLFYFIA), and 203–223 (TEVMIYTGLLTLAGIIIYSIV).

Belongs to the lipid A LpxF 4'-phosphatase family.

The protein localises to the cell inner membrane. The protein operates within bacterial outer membrane biogenesis; LPS lipid A biosynthesis. Functionally, probably removes the 4'-phosphate group from lipid A. Removal of this phosphate group confers resistance to cationic antimicrobial peptides (CAMPs), inflammation-associated peptides produced by the human host. This LPS modification helps maintain the stability of this commensal bacterium in gut microbiota. The chain is Lipid A 4'-phosphatase from Bacteroides thetaiotaomicron (strain ATCC 29148 / DSM 2079 / JCM 5827 / CCUG 10774 / NCTC 10582 / VPI-5482 / E50).